The primary structure comprises 193 residues: Holliday junction branch migration complex subunit RuvA (193 aa).

A domain I region spans residues 1 to 64; sequence MIGRIQGTLV…EDAQQLFGFA (64 aa). The segment at 65–139 is domain II; it reads TEIEREAFRQ…GKLAPDLGIT (75 aa). The interval 139–143 is flexible linker; it reads TGGKP. A domain III region spans residues 144–193; that stretch reads QAIEATSEVLQALLSLGYSEKEALLALKQIPPETSVSDGIRMGLKYLSKP.

Belongs to the RuvA family. As to quaternary structure, homotetramer. Forms an RuvA(8)-RuvB(12)-Holliday junction (HJ) complex. HJ DNA is sandwiched between 2 RuvA tetramers; dsDNA enters through RuvA and exits via RuvB. An RuvB hexamer assembles on each DNA strand where it exits the tetramer. Each RuvB hexamer is contacted by two RuvA subunits (via domain III) on 2 adjacent RuvB subunits; this complex drives branch migration. In the full resolvosome a probable DNA-RuvA(4)-RuvB(12)-RuvC(2) complex forms which resolves the HJ.

It localises to the cytoplasm. The RuvA-RuvB-RuvC complex processes Holliday junction (HJ) DNA during genetic recombination and DNA repair, while the RuvA-RuvB complex plays an important role in the rescue of blocked DNA replication forks via replication fork reversal (RFR). RuvA specifically binds to HJ cruciform DNA, conferring on it an open structure. The RuvB hexamer acts as an ATP-dependent pump, pulling dsDNA into and through the RuvAB complex. HJ branch migration allows RuvC to scan DNA until it finds its consensus sequence, where it cleaves and resolves the cruciform DNA. In Polynucleobacter asymbioticus (strain DSM 18221 / CIP 109841 / QLW-P1DMWA-1) (Polynucleobacter necessarius subsp. asymbioticus), this protein is Holliday junction branch migration complex subunit RuvA.